The sequence spans 561 residues: Tectonic-like complex member MKS1 (561 aa).

Residues 314–442 enclose the C2 B9-type domain; the sequence is LRLFVNGEVV…TASTWRPMEL (129 aa).

In terms of assembly, part of the tectonic-like complex (also named B9 complex). Interacts with TMEM107. Interacts with TCTN3, AHI1, TCTN1, TCTN2, CC2D2A. Interacts with FLNA. Interacts with TMEM67. Interacts with B9D1 and B9D2.

It localises to the cytoplasm. It is found in the cytoskeleton. The protein localises to the cilium basal body. The protein resides in the microtubule organizing center. Its subcellular location is the centrosome. In terms of biological role, component of the tectonic-like complex, a complex localized at the transition zone of primary cilia and acting as a barrier that prevents diffusion of transmembrane proteins between the cilia and plasma membranes. Involved in centrosome migration to the apical cell surface during early ciliogenesis. Required for ciliary structure and function, including a role in regulating length and appropriate number through modulating centrosome duplication. Required for cell branching morphology. The chain is Tectonic-like complex member MKS1 (Mks1) from Rattus norvegicus (Rat).